The chain runs to 119 residues: MQKLNRSFKISNEIKKKISWIICYQLCDPRLFNILISVSSVNLSRDFSYAKIYVSILNNKNISFKEILTILQNSSKHIRYLLAKGIFLRIIPTLHFCHDSSYVNGTKITNLINNVLYNK.

This sequence belongs to the RbfA family. Monomer. Binds 30S ribosomal subunits, but not 50S ribosomal subunits or 70S ribosomes.

Its subcellular location is the cytoplasm. Functionally, one of several proteins that assist in the late maturation steps of the functional core of the 30S ribosomal subunit. Associates with free 30S ribosomal subunits (but not with 30S subunits that are part of 70S ribosomes or polysomes). Required for efficient processing of 16S rRNA. May interact with the 5'-terminal helix region of 16S rRNA. The polypeptide is Ribosome-binding factor A (Buchnera aphidicola subsp. Baizongia pistaciae (strain Bp)).